We begin with the raw amino-acid sequence, 492 residues long: ATP synthase subunit beta, plastid (492 aa).

170-177 (GGAGVGKT) lines the ATP pocket.

It belongs to the ATPase alpha/beta chains family. As to quaternary structure, F-type ATPases have 2 components, CF(1) - the catalytic core - and CF(0) - the membrane proton channel. CF(1) has five subunits: alpha(3), beta(3), gamma(1), delta(1), epsilon(1). CF(0) has four main subunits: a(1), b(1), b'(1) and c(9-12).

It is found in the plastid membrane. The enzyme catalyses ATP + H2O + 4 H(+)(in) = ADP + phosphate + 5 H(+)(out). In terms of biological role, produces ATP from ADP in the presence of a proton gradient across the membrane. The catalytic sites are hosted primarily by the beta subunits. This Aneura mirabilis (Parasitic liverwort) protein is ATP synthase subunit beta, plastid.